Consider the following 303-residue polypeptide: Acetylglutamate kinase (303 aa).

Substrate-binding positions include 69–70 (GG), arginine 91, and asparagine 201.

Belongs to the acetylglutamate kinase family. ArgB subfamily.

The protein resides in the cytoplasm. The catalysed reaction is N-acetyl-L-glutamate + ATP = N-acetyl-L-glutamyl 5-phosphate + ADP. It functions in the pathway amino-acid biosynthesis; L-arginine biosynthesis; N(2)-acetyl-L-ornithine from L-glutamate: step 2/4. Functionally, catalyzes the ATP-dependent phosphorylation of N-acetyl-L-glutamate. This Novosphingobium aromaticivorans (strain ATCC 700278 / DSM 12444 / CCUG 56034 / CIP 105152 / NBRC 16084 / F199) protein is Acetylglutamate kinase.